Consider the following 436-residue polypeptide: Chromosomal replication initiator protein DnaA (436 aa).

A domain I, interacts with DnaA modulators region spans residues 1–80; that stretch reads MSHEAVWQHV…QAPRFELRVV (80 aa). The segment at 80-100 is domain II; sequence VPGVVVQEDIFQAAPAEAPRP. The interval 101–317 is domain III, AAA+ region; that stretch reads KLNPKYTFEN…GALMRAIAFA (217 aa). Gly145, Gly147, Lys148, and Thr149 together coordinate ATP. The interval 318–436 is domain IV, binds dsDNA; it reads SLNGVELTRA…LLRTLREACT (119 aa).

The protein belongs to the DnaA family. Oligomerizes as a right-handed, spiral filament on DNA at oriC.

The protein resides in the cytoplasm. Its function is as follows. Plays an essential role in the initiation and regulation of chromosomal replication. ATP-DnaA binds to the origin of replication (oriC) to initiate formation of the DNA replication initiation complex once per cell cycle. Binds the DnaA box (a 9 base pair repeat at the origin) and separates the double-stranded (ds)DNA. Forms a right-handed helical filament on oriC DNA; dsDNA binds to the exterior of the filament while single-stranded (ss)DNA is stabiized in the filament's interior. The ATP-DnaA-oriC complex binds and stabilizes one strand of the AT-rich DNA unwinding element (DUE), permitting loading of DNA polymerase. After initiation quickly degrades to an ADP-DnaA complex that is not apt for DNA replication. Binds acidic phospholipids. This chain is Chromosomal replication initiator protein DnaA, found in Thermus thermophilus (strain ATCC BAA-163 / DSM 7039 / HB27).